The following is a 186-amino-acid chain: Der GTPase-activating protein YihI (186 aa).

Residues 39-77 (LDAKAREDKKKRKHKGLASGSRHSAVEEKANKLQNEIKD) are disordered. The segment covering 62 to 77 (SAVEEKANKLQNEIKD) has biased composition (basic and acidic residues).

Belongs to the YihI family. In terms of assembly, interacts with Der.

A GTPase-activating protein (GAP) that modifies Der/EngA GTPase function. May play a role in ribosome biogenesis. This chain is Der GTPase-activating protein YihI, found in Haemophilus influenzae (strain 86-028NP).